The sequence spans 524 residues: Glucose-6-phosphate 1-dehydrogenase (524 aa).

At Ser-20 the chain carries Phosphoserine. NADP(+) contacts are provided by residues 42-49 (GASGDLAK), Arg-76, and Lys-175. Residues Lys-175, 205 to 209 (HYLGK), Glu-243, and Asp-262 contribute to the D-glucose 6-phosphate site. His-267 (proton acceptor) is an active-site residue. Arg-362 contacts NADP(+). Lys-365 and Arg-370 together coordinate D-glucose 6-phosphate. 3 residues coordinate NADP(+): Lys-371, Arg-375, and Arg-398. Gln-400 contacts D-glucose 6-phosphate. NADP(+) is bound by residues 406–408 (YFK), 426–428 (DLT), Arg-492, Tyr-508, and Trp-514.

It belongs to the glucose-6-phosphate dehydrogenase family.

The protein localises to the cytoplasm. It is found in the cytosol. The catalysed reaction is D-glucose 6-phosphate + NADP(+) = 6-phospho-D-glucono-1,5-lactone + NADPH + H(+). It functions in the pathway carbohydrate degradation; pentose phosphate pathway; D-ribulose 5-phosphate from D-glucose 6-phosphate (oxidative stage): step 1/3. Cytosolic glucose-6-phosphate dehydrogenase that catalyzes the first and rate-limiting step of the oxidative branch within the pentose phosphate pathway/shunt, an alternative route to glycolysis for the dissimilation of carbohydrates and a major source of reducing power and metabolic intermediates for fatty acid and nucleic acid biosynthetic processes. The polypeptide is Glucose-6-phosphate 1-dehydrogenase (Drosophila melanogaster (Fruit fly)).